The sequence spans 1147 residues: Myosin light chain kinase, smooth muscle (1147 aa).

The interval 1-41 (MDFRANLQRQVKPKTVSEEERKVHSPQQVDFRSVLAKKGTP) is actin-binding. The segment at 1-330 (MDFRANLQRQ…PPASPGTAPT (330 aa)) is disordered. Positions 26–41 (PQQVDFRSVLAKKGTP) are calmodulin-binding. The span at 43–55 (TPVPEKAPPPKPA) shows a compositional bias: pro residues. 2 repeat units span residues 100–111 (SLKPVANAKPAE) and 112–123 (TLKPVANTKPAE). The interval 100–288 (SLKPVANAKP…KAVANAKPAE (189 aa)) is 16 X 12 AA tandem repeats. The 3; truncated repeat unit spans residues 124–132 (TLKPVANAE). 13 repeat units span residues 133–144 (TLKPMGNAKPAE), 145–156 (SSKPVGNTKPAE), 157–168 (TLKPVGNTKPAE), 169–180 (TLKPVGNIKPAE), 181–192 (TLKPVGNIKPAE), 193–204 (TLKPVGNTKPTE), 205–216 (TLKPVANAKSAE), 217–228 (TLKPIANTKPAE), 229–240 (TLKPVGNAKPAE), 241–252 (TLKPVGNAKPAE), 253–264 (TLKPVGNAKPAE), 265–276 (TLKPVGNAKPAE), and 277–288 (TLKAVANAKPAE). Positions 292–692 (PAGKEELKKE…TVTVNTEQKV (401 aa)) are actin-binding (calcium/calmodulin-insensitive). A compositionally biased stretch (basic and acidic residues) spans 293–320 (AGKEELKKEVQNDVNCKREKAGAADNEK). 2 Ig-like C2-type domains span residues 329-417 (PTFK…CHVT) and 469-557 (PQIP…VNLT). A disulfide bond links C350 and C401. Disordered regions lie at residues 424–476 (SENA…QFPE) and 644–678 (SEPSQESELTTVGEKPEEPKDEVEEVSDDDEKEPE). Positions 459–472 (PKTPPKAATPPQIP) are enriched in pro residues. Residues 565 to 657 (PAGTPCASDI…QESELTTVGE (93 aa)) form the Fibronectin type-III domain. Residues 644–653 (SEPSQESELT) are compositionally biased toward polar residues. Acidic residues predominate over residues 662-677 (PKDEVEEVSDDDEKEP). Phosphoserine is present on S670. Residue Y681 is modified to Phosphotyrosine; by ABL1. The region spanning 696–951 (YDIEERLGSG…CTQCLQHPWL (256 aa)) is the Protein kinase domain. ATP contacts are provided by residues 702 to 710 (LGSGKFGQV) and K725. At Y807 the chain carries Phosphotyrosine; by ABL1. D817 serves as the catalytic Proton acceptor. Y867 is subject to Phosphotyrosine; by ABL1. The segment at 943 to 1006 (TQCLQHPWLM…SGLSGRKSST (64 aa)) is calmodulin-binding. S991, S992, S1004, S1005, and S1008 each carry phosphoserine. A disordered region spans residues 999–1019 (LSGRKSSTGSPTSPLTAERLE). A compositionally biased stretch (polar residues) spans 1002–1013 (RKSSTGSPTSPL). At T1010 the chain carries Phosphothreonine. S1011 bears the Phosphoserine mark. Residues 1041 to 1130 (PYFSKTIRDL…GEATCTAELI (90 aa)) enclose the Ig-like C2-type 3 domain. A disulfide bond links C1062 and C1114.

The protein belongs to the protein kinase superfamily. CAMK Ser/Thr protein kinase family. As to quaternary structure, all isoforms including Telokin bind calmodulin. Interacts with SVIL. Interacts with CTTN; this interaction is reduced during thrombin-induced endothelial cell (EC) contraction but is promoted by the barrier-protective agonist sphingosine 1-phosphate (S1P) within lamellipodia. A complex made of ABL1, CTTN and MYLK regulates cortical actin-based cytoskeletal rearrangement critical to sphingosine 1-phosphate (S1P)-mediated endothelial cell (EC) barrier enhancement. Binds to NAA10/ARD1 and PTK2B/PYK2. Requires Mg(2+) as cofactor. It depends on Ca(2+) as a cofactor. In terms of processing, the C-terminus is deglutamylated by AGTPBP1/CCP1, AGBL1/CCP4 and AGBL4/CCP6, leading to the formation of Myosin light chain kinase, smooth muscle, deglutamylated form. The consequences of C-terminal deglutamylation are unknown. Can probably be down-regulated by phosphorylation. Tyrosine phosphorylation by ABL1 increases kinase activity, reverses MLCK-mediated inhibition of Arp2/3-mediated actin polymerization, and enhances CTTN-binding. Phosphorylation by SRC promotes CTTN binding. In terms of tissue distribution, isoform Telokin is found in all smooth muscle tested except the aorta. It is not present in non-muscle tissue.

The protein resides in the cytoplasm. The protein localises to the cell projection. It localises to the lamellipodium. Its subcellular location is the cleavage furrow. It is found in the cytoskeleton. The protein resides in the stress fiber. It carries out the reaction L-seryl-[myosin light chain] + ATP = O-phospho-L-seryl-[myosin light chain] + ADP + H(+). It catalyses the reaction L-threonyl-[myosin light chain] + ATP = O-phospho-L-threonyl-[myosin light chain] + ADP + H(+). All catalytically active isoforms require binding to calcium and calmodulin for activation. Its function is as follows. Calcium/calmodulin-dependent myosin light chain kinase implicated in smooth muscle contraction via phosphorylation of myosin light chains (MLC). Also regulates actin-myosin interaction through a non-kinase activity. Phosphorylates PTK2B/PYK2 and myosin light-chains. Involved in the inflammatory response (e.g. apoptosis, vascular permeability, leukocyte diapedesis), cell motility and morphology, airway hyperreactivity and other activities relevant to asthma. Required for tonic airway smooth muscle contraction that is necessary for physiological and asthmatic airway resistance. Necessary for gastrointestinal motility. Implicated in the regulation of endothelial as well as vascular permeability, probably via the regulation of cytoskeletal rearrangements. In the nervous system it has been shown to control the growth initiation of astrocytic processes in culture and to participate in transmitter release at synapses formed between cultured sympathetic ganglion cells. Critical participant in signaling sequences that result in fibroblast apoptosis. Plays a role in the regulation of epithelial cell survival. Required for epithelial wound healing, especially during actomyosin ring contraction during purse-string wound closure. Mediates RhoA-dependent membrane blebbing. Triggers TRPC5 channel activity in a calcium-dependent signaling, by inducing its subcellular localization at the plasma membrane. Promotes cell migration (including tumor cells) and tumor metastasis. PTK2B/PYK2 activation by phosphorylation mediates ITGB2 activation and is thus essential to trigger neutrophil transmigration during acute lung injury (ALI). May regulate optic nerve head astrocyte migration. Probably involved in mitotic cytoskeletal regulation. Regulates tight junction probably by modulating ZO-1 exchange in the perijunctional actomyosin ring. Mediates burn-induced microvascular barrier injury; triggers endothelial contraction in the development of microvascular hyperpermeability by phosphorylating MLC. Essential for intestinal barrier dysfunction. Mediates Giardia spp.-mediated reduced epithelial barrier function during giardiasis intestinal infection via reorganization of cytoskeletal F-actin and tight junctional ZO-1. Necessary for hypotonicity-induced Ca(2+) entry and subsequent activation of volume-sensitive organic osmolyte/anion channels (VSOAC) in cervical cancer cells. The protein is Myosin light chain kinase, smooth muscle (MYLK) of Oryctolagus cuniculus (Rabbit).